The sequence spans 1488 residues: Putative E3 ubiquitin-protein ligase LIN (1488 aa).

3 disordered regions span residues 297-330 (GFSM…EQSS), 351-414 (YDAS…PLRR), and 432-500 (IVSD…SSSS). Over residues 366 to 380 (EPKKNIKDEDVEPKV) the composition is skewed to basic and acidic residues. Residues 382–411 (RSNQKNQMNSPNISPMESPRRASNYSSTNP) are compositionally biased toward polar residues. Residues 432 to 444 (IVSDHSLSSSPDT) are compositionally biased toward low complexity. Polar residues predominate over residues 468–486 (SQTPSMNQDNENSLVLNDS). The U-box domain occupies 512–587 (KPPKDFVCPI…VSWKEQNPEL (76 aa)). WD repeat units lie at residues 1207 to 1244 (SSNG…PRVI), 1249 to 1290 (EHKK…DVYD), 1412 to 1451 (SLST…RVAS), and 1456 to 1488 (GGNT…WALD).

As to expression, expressed in roots and nodules.

It catalyses the reaction S-ubiquitinyl-[E2 ubiquitin-conjugating enzyme]-L-cysteine + [acceptor protein]-L-lysine = [E2 ubiquitin-conjugating enzyme]-L-cysteine + N(6)-ubiquitinyl-[acceptor protein]-L-lysine.. Its pathway is protein modification; protein ubiquitination. Its function is as follows. Putative E3 ubiquitin ligase involved in the rhizobial infection process. Plays an important role in the early steps of bacterial symbiont thread formation in roots, and in growth, differentiation and maintenance of nodules. In Medicago truncatula (Barrel medic), this protein is Putative E3 ubiquitin-protein ligase LIN.